The primary structure comprises 37 residues: Kappa-actitoxin-Bcs3b (37 aa).

The ShKT domain occupies 2 to 37 (CKDGFPTATCQHAKLVGNCKNSQKYRANCAKTCGPC). Cystine bridges form between C2–C37, C11–C30, and C20–C34. The crucial for binding to potassium channels stretch occupies residues 25–26 (KY).

This sequence belongs to the sea anemone type 1 potassium channel toxin family. Type 1b subfamily.

It localises to the secreted. The protein localises to the nematocyst. In terms of biological role, inhibits voltage-gated potassium channels (IC(50)=14.42 nM for rKCNA1/Kv1.1, IC(50)=80.4 nM for rKCNA2/Kv1.2, IC(50)=7.76 nM for rKCNA6/Kv1.6, IC(50)=13.12 nM for hKCNA3/Kv1.3, and IC(50)=49.14 nM for insect Shaker IR). Binds the Shaker IR channels in a voltage-independent manner. This Bunodosoma caissarum (Sea anemone) protein is Kappa-actitoxin-Bcs3b.